Consider the following 344-residue polypeptide: Lipase chaperone (344 aa).

A helical membrane pass occupies residues 14-34; that stretch reads AVVYGVVGLAAIAGVAMWSGA. The disordered stretch occupies residues 39–78; sequence ATGASGESPEASVAGGSVTAPPQAAVPASTGLPPSLAGSS.

It belongs to the lipase chaperone family.

It localises to the cell inner membrane. Functionally, may be involved in the folding of the extracellular lipase during its passage through the periplasm. In Pseudomonas sp. (strain KWI-56), this protein is Lipase chaperone (lifO).